A 1173-amino-acid chain; its full sequence is Calcium-transporting ATPase 2 (1173 aa).

The interval 1–24 (MSRQDENSALLANNENNKPSYTGN) is disordered. Over 1 to 114 (MSRQDENSAL…LQLVWAAFND (114 aa)) the chain is Cytoplasmic. Residues 7–17 (NSALLANNENN) show a composition bias toward low complexity. A helical transmembrane segment spans residues 115 to 139 (KTMQLLTVAAVVSFVLGLYELWMQP). Over 140-152 (PQYDPEGNKIKQV) the chain is Vacuolar. A helical transmembrane segment spans residues 153 to 173 (DWIEGVAIMIAVFVVVLVSAA). Residues 174–349 (NDYQKELQFA…LADNISVYGC (176 aa)) lie on the Cytoplasmic side of the membrane. A helical membrane pass occupies residues 350 to 368 (VSAIILFLVLFTRYLFYII). Residues 369–388 (PEDGRFHDLDPAQKGSKFMN) lie on the Vacuolar side of the membrane. A helical membrane pass occupies residues 389-409 (IFITSITVIVVAVPEGLPLAV). Val-398 and Glu-403 together coordinate Ca(2+). The Cytoplasmic portion of the chain corresponds to 410 to 899 (TLALAFATTR…RCVSVSIKKF (490 aa)). Asp-445 functions as the 4-aspartylphosphate intermediate in the catalytic mechanism. Positions 445 and 447 each coordinate Mg(2+). ATP contacts are provided by residues Thr-447, Lys-643, 762-764 (TGD), Arg-816, and Lys-822. Position 841 (Asp-841) interacts with Mg(2+). Asn-844 contributes to the ATP binding site. The helical transmembrane segment at 900–922 (IQFQLIVNITAVILTFVSSVASS) threads the bilayer. A Ca(2+)-binding site is contributed by Asn-907. Topologically, residues 923–929 (DETSVLT) are vacuolar. A helical membrane pass occupies residues 930–950 (AVQLLWINLIMDTLAALALAT). Positions 937 and 941 each coordinate Ca(2+). At 951–976 (DKPDPNIMDRKPRGRSTSLISVSTWK) the chain is on the cytoplasmic side. The chain crosses the membrane as a helical span at residues 977–998 (MILSQATLQLIVTFILHFYGPE). The Vacuolar portion of the chain corresponds to 999–1010 (LFFKKHEDEITS). Residues 1011–1029 (HQQQQLNAMTFNTFVWLQF) form a helical membrane-spanning segment. At 1030–1065 (FTMLVSRKLDEGDGISNWRGRISAANLNFFQDLGRN) the chain is on the cytoplasmic side. A helical transmembrane segment spans residues 1066–1086 (YYFLTIMAIIGSCQVLIMFFG). Over 1087–1099 (GAPFSIARQTKSM) the chain is Vacuolar. A helical membrane pass occupies residues 1100–1120 (WITAVLCGMLSLIMGVLVRIC). Over 1121-1173 (PDEVAVKVFPAAFVQRFKYVFGLEFLRKNHTGKHDDEEALLEESDSPESTAFY) the chain is Cytoplasmic.

It belongs to the cation transport ATPase (P-type) (TC 3.A.3) family.

Its subcellular location is the vacuole membrane. The catalysed reaction is Ca(2+)(in) + ATP + H2O = Ca(2+)(out) + ADP + phosphate + H(+). This magnesium-dependent enzyme catalyzes the hydrolysis of ATP coupled with the transport of calcium. Transports the calcium to the vacuole and participates in the control of the cytosolic free calcium. In Saccharomyces cerevisiae (strain ATCC 204508 / S288c) (Baker's yeast), this protein is Calcium-transporting ATPase 2 (PMC1).